We begin with the raw amino-acid sequence, 133 residues long: Small ribosomal subunit protein uS11 (133 aa).

This sequence belongs to the universal ribosomal protein uS11 family. As to quaternary structure, part of the 30S ribosomal subunit. Interacts with proteins S7 and S18. Binds to IF-3.

In terms of biological role, located on the platform of the 30S subunit, it bridges several disparate RNA helices of the 16S rRNA. Forms part of the Shine-Dalgarno cleft in the 70S ribosome. In Burkholderia pseudomallei (strain 1106a), this protein is Small ribosomal subunit protein uS11.